The following is a 90-amino-acid chain: UPF0298 protein SSU05_1549 (90 aa).

Belongs to the UPF0298 family.

Its subcellular location is the cytoplasm. The polypeptide is UPF0298 protein SSU05_1549 (Streptococcus suis (strain 05ZYH33)).